Consider the following 615-residue polypeptide: ATP-dependent zinc metalloprotease FtsH 2 (615 aa).

Topologically, residues Met-1–Asn-7 are cytoplasmic. Residues Phe-8–Ser-28 traverse the membrane as a helical segment. At Arg-29–Thr-99 the chain is on the periplasmic side. Residues Phe-100 to Tyr-120 form a helical membrane-spanning segment. Over Phe-121 to Val-615 the chain is Cytoplasmic. Residue Gly-195–Thr-202 participates in ATP binding. His-418 is a binding site for Zn(2+). The active site involves Glu-419. Zn(2+) contacts are provided by His-422 and Asp-495.

It in the central section; belongs to the AAA ATPase family. In the C-terminal section; belongs to the peptidase M41 family. Homohexamer. Zn(2+) is required as a cofactor.

Its subcellular location is the cell inner membrane. Functionally, acts as a processive, ATP-dependent zinc metallopeptidase for both cytoplasmic and membrane proteins. Plays a role in the quality control of integral membrane proteins. The sequence is that of ATP-dependent zinc metalloprotease FtsH 2 from Bdellovibrio bacteriovorus (strain ATCC 15356 / DSM 50701 / NCIMB 9529 / HD100).